A 340-amino-acid chain; its full sequence is GTP 3',8-cyclase (340 aa).

Residues 8–227 (KLGRPIRDLR…EMIEQNFDIE (220 aa)) form the Radical SAM core domain. A GTP-binding site is contributed by Arg-17. 2 residues coordinate [4Fe-4S] cluster: Cys-24 and Cys-28. Tyr-30 serves as a coordination point for S-adenosyl-L-methionine. Cys-31 lines the [4Fe-4S] cluster pocket. Residue Arg-71 participates in GTP binding. Gly-75 lines the S-adenosyl-L-methionine pocket. Residue Thr-102 coordinates GTP. Ser-126 provides a ligand contact to S-adenosyl-L-methionine. Lys-163 serves as a coordination point for GTP. An S-adenosyl-L-methionine-binding site is contributed by Met-197. Cys-261 and Cys-264 together coordinate [4Fe-4S] cluster. 266–268 (RAR) contributes to the GTP binding site. Cys-278 provides a ligand contact to [4Fe-4S] cluster.

The protein belongs to the radical SAM superfamily. MoaA family. Monomer and homodimer. The cofactor is [4Fe-4S] cluster.

It catalyses the reaction GTP + AH2 + S-adenosyl-L-methionine = (8S)-3',8-cyclo-7,8-dihydroguanosine 5'-triphosphate + 5'-deoxyadenosine + L-methionine + A + H(+). Its pathway is cofactor biosynthesis; molybdopterin biosynthesis. In terms of biological role, catalyzes the cyclization of GTP to (8S)-3',8-cyclo-7,8-dihydroguanosine 5'-triphosphate. The polypeptide is GTP 3',8-cyclase (Staphylococcus saprophyticus subsp. saprophyticus (strain ATCC 15305 / DSM 20229 / NCIMB 8711 / NCTC 7292 / S-41)).